The following is a 305-amino-acid chain: Acetylglutamate kinase (305 aa).

Residues 75-76 (GG), Arg97, and Asn202 contribute to the substrate site.

Belongs to the acetylglutamate kinase family. ArgB subfamily.

It is found in the cytoplasm. The enzyme catalyses N-acetyl-L-glutamate + ATP = N-acetyl-L-glutamyl 5-phosphate + ADP. The protein operates within amino-acid biosynthesis; L-arginine biosynthesis; N(2)-acetyl-L-ornithine from L-glutamate: step 2/4. Functionally, catalyzes the ATP-dependent phosphorylation of N-acetyl-L-glutamate. The protein is Acetylglutamate kinase of Rhodospirillum centenum (strain ATCC 51521 / SW).